We begin with the raw amino-acid sequence, 138 residues long: Translation initiation factor 2 subunit beta (138 aa).

Belongs to the eIF-2-beta/eIF-5 family. Heterotrimer composed of an alpha, a beta and a gamma chain.

Its function is as follows. eIF-2 functions in the early steps of protein synthesis by forming a ternary complex with GTP and initiator tRNA. The polypeptide is Translation initiation factor 2 subunit beta (Methanococcus vannielii (strain ATCC 35089 / DSM 1224 / JCM 13029 / OCM 148 / SB)).